The chain runs to 429 residues: Phenylalanine--tRNA ligase, chloroplastic/mitochondrial (429 aa).

Residues 1–53 constitute a chloroplast and mitochondrion transit peptide; the sequence is MTVFSVQSTIFSRASVALLSSNGFKRFSFVSSFSSSAAYSPPKMRKRRYPIVS. Ala54 carries the post-translational modification N-acetylalanine. Substrate contacts are provided by residues 163–166, Arg185, 192–194, 199–201, Glu269, and Phe294; these read SAHQ, THY, and QME. The FDX-ACB domain occupies 338 to 429; it reads SKYPPCYKDI…VQKKLNVELR (92 aa).

Belongs to the class-II aminoacyl-tRNA synthetase family. Monomer.

Its subcellular location is the plastid. The protein localises to the chloroplast stroma. It is found in the mitochondrion matrix. The catalysed reaction is tRNA(Phe) + L-phenylalanine + ATP = L-phenylalanyl-tRNA(Phe) + AMP + diphosphate + H(+). Is responsible for the charging of tRNA(Phe) with phenylalanine in mitochondrial translation. In Arabidopsis thaliana (Mouse-ear cress), this protein is Phenylalanine--tRNA ligase, chloroplastic/mitochondrial.